Here is a 214-residue protein sequence, read N- to C-terminus: Probable nicotinate-nucleotide adenylyltransferase (214 aa).

This sequence belongs to the NadD family.

The enzyme catalyses nicotinate beta-D-ribonucleotide + ATP + H(+) = deamido-NAD(+) + diphosphate. The protein operates within cofactor biosynthesis; NAD(+) biosynthesis; deamido-NAD(+) from nicotinate D-ribonucleotide: step 1/1. Catalyzes the reversible adenylation of nicotinate mononucleotide (NaMN) to nicotinic acid adenine dinucleotide (NaAD). The sequence is that of Probable nicotinate-nucleotide adenylyltransferase from Pseudomonas paraeruginosa (strain DSM 24068 / PA7) (Pseudomonas aeruginosa (strain PA7)).